Here is a 382-residue protein sequence, read N- to C-terminus: D-galactonate dehydratase (382 aa).

Mg(2+) is bound at residue Asp183. Catalysis depends on His185, which acts as the Proton donor. Glu209 and Glu235 together coordinate Mg(2+). His285 (proton acceptor) is an active-site residue.

It belongs to the mandelate racemase/muconate lactonizing enzyme family. GalD subfamily. Mg(2+) is required as a cofactor.

It carries out the reaction D-galactonate = 2-dehydro-3-deoxy-D-galactonate + H2O. It functions in the pathway carbohydrate acid metabolism; D-galactonate degradation; D-glyceraldehyde 3-phosphate and pyruvate from D-galactonate: step 1/3. Catalyzes the dehydration of D-galactonate to 2-keto-3-deoxy-D-galactonate. The chain is D-galactonate dehydratase from Xanthomonas campestris pv. campestris (strain 8004).